The sequence spans 245 residues: 6-carboxyhexanoate--CoA ligase (245 aa).

This sequence belongs to the BioW family. In terms of assembly, homodimer. Mg(2+) serves as cofactor.

The enzyme catalyses heptanedioate + ATP + CoA = 6-carboxyhexanoyl-CoA + AMP + diphosphate. It functions in the pathway metabolic intermediate metabolism; pimeloyl-CoA biosynthesis; pimeloyl-CoA from pimelate: step 1/1. Catalyzes the transformation of pimelate into pimeloyl-CoA with concomitant hydrolysis of ATP to AMP. The chain is 6-carboxyhexanoate--CoA ligase from Sulfurihydrogenibium sp. (strain YO3AOP1).